The sequence spans 195 residues: Recombination protein RecR (195 aa).

Residues 53–68 form a C4-type zinc finger; that stretch reads CSVCFNIDVKSPCSIC. One can recognise a Toprim domain in the interval 76-171; the sequence is QLLCIVEELG…KITRLACGIP (96 aa).

The protein belongs to the RecR family.

In terms of biological role, may play a role in DNA repair. It seems to be involved in an RecBC-independent recombinational process of DNA repair. It may act with RecF and RecO. The chain is Recombination protein RecR from Ehrlichia canis (strain Jake).